Here is a 249-residue protein sequence, read N- to C-terminus: Mediator of RNA polymerase II transcription subunit 8 (249 aa).

A coiled-coil region spans residues 154–200 (LEEREMGIQNVVTGLRRQLEDEDEEASESEEEVEEEEMEVVGVRRRS). Residues 170–249 (RQLEDEDEEA…MTTGIPPTQR (80 aa)) are disordered. The segment covering 173–192 (EDEDEEASESEEEVEEEEME) has biased composition (acidic residues). Over residues 211-232 (AAPAPGSRQQQQQQKAAGPAVP) the composition is skewed to low complexity.

This sequence belongs to the Mediator complex subunit 8 family. Component of the Mediator complex.

The protein localises to the nucleus. Its function is as follows. Component of the Mediator complex, a coactivator involved in the regulated transcription of nearly all RNA polymerase II-dependent genes. Mediator functions as a bridge to convey information from gene-specific regulatory proteins to the basal RNA polymerase II transcription machinery. Mediator is recruited to promoters by direct interactions with regulatory proteins and serves as a scaffold for the assembly of a functional preinitiation complex with RNA polymerase II and the general transcription factors. The sequence is that of Mediator of RNA polymerase II transcription subunit 8 (med8) from Aspergillus fumigatus (strain ATCC MYA-4609 / CBS 101355 / FGSC A1100 / Af293) (Neosartorya fumigata).